We begin with the raw amino-acid sequence, 354 residues long: Uroporphyrinogen decarboxylase (354 aa).

Residues 27-31 (RQAGR), D77, Y153, T208, and H326 contribute to the substrate site.

This sequence belongs to the uroporphyrinogen decarboxylase family. As to quaternary structure, homodimer.

The protein localises to the cytoplasm. It carries out the reaction uroporphyrinogen III + 4 H(+) = coproporphyrinogen III + 4 CO2. It participates in porphyrin-containing compound metabolism; protoporphyrin-IX biosynthesis; coproporphyrinogen-III from 5-aminolevulinate: step 4/4. Catalyzes the decarboxylation of four acetate groups of uroporphyrinogen-III to yield coproporphyrinogen-III. The chain is Uroporphyrinogen decarboxylase from Neisseria meningitidis serogroup C / serotype 2a (strain ATCC 700532 / DSM 15464 / FAM18).